A 236-amino-acid chain; its full sequence is Exotoxin type H (236 aa).

An N-terminal signal peptide occupies residues 1–32 (MRYNCRYSHIDKKIYSMIICLSFLLYSNVVQA).

The protein belongs to the staphylococcal/streptococcal toxin family.

The protein localises to the secreted. Functionally, mitogenic for human peripheral blood lymphocytes. In Streptococcus pyogenes serotype M1, this protein is Exotoxin type H (speH).